A 186-amino-acid chain; its full sequence is Alkyl hydroperoxide reductase AhpD (186 aa).

Cys132 serves as the catalytic Proton donor. The cysteines at positions 132 and 135 are disulfide-linked. Cys135 functions as the Cysteine sulfenic acid (-SOH) intermediate in the catalytic mechanism.

Belongs to the AhpD family.

It carries out the reaction N(6)-[(R)-dihydrolipoyl]-L-lysyl-[lipoyl-carrier protein] + a hydroperoxide = N(6)-[(R)-lipoyl]-L-lysyl-[lipoyl-carrier protein] + an alcohol + H2O. In terms of biological role, antioxidant protein with alkyl hydroperoxidase activity. Required for the reduction of the AhpC active site cysteine residues and for the regeneration of the AhpC enzyme activity. The chain is Alkyl hydroperoxide reductase AhpD from Anaeromyxobacter dehalogenans (strain 2CP-1 / ATCC BAA-258).